The primary structure comprises 390 residues: Succinate--CoA ligase [ADP-forming] subunit beta (390 aa).

The ATP-grasp domain occupies 9–248; the sequence is KEILRRHKAN…ITEEDPLEVQ (240 aa). ATP-binding positions include Lys-50, 57-59, Glu-103, Ile-106, and Glu-111; that span reads GRG. Mg(2+) contacts are provided by Asn-203 and Asp-217. Substrate contacts are provided by residues Asn-268 and 325–327; that span reads GIV.

Belongs to the succinate/malate CoA ligase beta subunit family. As to quaternary structure, heterotetramer of two alpha and two beta subunits. Mg(2+) is required as a cofactor.

The enzyme catalyses succinate + ATP + CoA = succinyl-CoA + ADP + phosphate. The catalysed reaction is GTP + succinate + CoA = succinyl-CoA + GDP + phosphate. It participates in carbohydrate metabolism; tricarboxylic acid cycle; succinate from succinyl-CoA (ligase route): step 1/1. Succinyl-CoA synthetase functions in the citric acid cycle (TCA), coupling the hydrolysis of succinyl-CoA to the synthesis of either ATP or GTP and thus represents the only step of substrate-level phosphorylation in the TCA. The beta subunit provides nucleotide specificity of the enzyme and binds the substrate succinate, while the binding sites for coenzyme A and phosphate are found in the alpha subunit. This Leptospira interrogans serogroup Icterohaemorrhagiae serovar copenhageni (strain Fiocruz L1-130) protein is Succinate--CoA ligase [ADP-forming] subunit beta.